The chain runs to 282 residues: Bis(5'-nucleosyl)-tetraphosphatase, symmetrical (282 aa).

It belongs to the Ap4A hydrolase family.

The catalysed reaction is P(1),P(4)-bis(5'-adenosyl) tetraphosphate + H2O = 2 ADP + 2 H(+). Functionally, hydrolyzes diadenosine 5',5'''-P1,P4-tetraphosphate to yield ADP. This Escherichia coli O81 (strain ED1a) protein is Bis(5'-nucleosyl)-tetraphosphatase, symmetrical.